The chain runs to 99 residues: UPF0235 protein Sbal_3028 (99 aa).

This sequence belongs to the UPF0235 family.

The protein is UPF0235 protein Sbal_3028 of Shewanella baltica (strain OS155 / ATCC BAA-1091).